A 257-amino-acid chain; its full sequence is Phosphonates import ATP-binding protein PhnC 1 (257 aa).

Residues 2–246 enclose the ABC transporter domain; the sequence is LKITNLTKRY…EMDTIYAGVP (245 aa). 35–42 contacts ATP; it reads GSSGAGKS.

This sequence belongs to the ABC transporter superfamily. Phosphonates importer (TC 3.A.1.9.1) family. As to quaternary structure, the complex is composed of two ATP-binding proteins (PhnC), two transmembrane proteins (PhnE) and a solute-binding protein (PhnD).

The protein resides in the cell inner membrane. The catalysed reaction is phosphonate(out) + ATP + H2O = phosphonate(in) + ADP + phosphate + H(+). In terms of biological role, part of the ABC transporter complex PhnCDE involved in phosphonates import. Responsible for energy coupling to the transport system. This Ruegeria sp. (strain TM1040) (Silicibacter sp.) protein is Phosphonates import ATP-binding protein PhnC 1.